We begin with the raw amino-acid sequence, 139 residues long: Acidic phospholipase A2 Tgc-E6 (139 aa).

An N-terminal signal peptide occupies residues 1–16 (MRTLWIMAVLLLGVEG). 7 disulfide bridges follow: Cys42–Cys132, Cys44–Cys60, Cys59–Cys111, Cys65–Cys139, Cys66–Cys104, Cys73–Cys97, and Cys91–Cys102. Tyr43, Gly45, and Gly47 together coordinate Ca(2+). His63 is an active-site residue. Asp64 contacts Ca(2+). The active site involves Asp105.

The protein belongs to the phospholipase A2 family. Group II subfamily. D49 sub-subfamily. Monomer. Ca(2+) is required as a cofactor. Expressed by the venom gland.

The protein resides in the secreted. It catalyses the reaction a 1,2-diacyl-sn-glycero-3-phosphocholine + H2O = a 1-acyl-sn-glycero-3-phosphocholine + a fatty acid + H(+). Functionally, snake venom phospholipase A2 (PLA2) that inhibits the ADP-(IC(50)=272 nM) and collagen-induced (IC(50)=518 nM) human platelet aggregation in platelet rich plasma. Exhibits very high hydrolytic activities toward the synthetic lecithin, and prefers the anionic micelles (dPPC with deoxycholate) to the zwitterionic micelles (dPPC with Triton X-100). PLA2 catalyzes the calcium-dependent hydrolysis of the 2-acyl groups in 3-sn-phosphoglycerides. This Trimeresurus gracilis (Kikuchi habu) protein is Acidic phospholipase A2 Tgc-E6.